A 366-amino-acid polypeptide reads, in one-letter code: tRNA/tmRNA (uracil-C(5))-methyltransferase (366 aa).

5 residues coordinate S-adenosyl-L-methionine: glutamine 190, tyrosine 218, asparagine 223, glutamate 239, and aspartate 299. Cysteine 324 acts as the Nucleophile in catalysis. Residue glutamate 358 is the Proton acceptor of the active site.

The protein belongs to the class I-like SAM-binding methyltransferase superfamily. RNA M5U methyltransferase family. TrmA subfamily.

It catalyses the reaction uridine(54) in tRNA + S-adenosyl-L-methionine = 5-methyluridine(54) in tRNA + S-adenosyl-L-homocysteine + H(+). The catalysed reaction is uridine(341) in tmRNA + S-adenosyl-L-methionine = 5-methyluridine(341) in tmRNA + S-adenosyl-L-homocysteine + H(+). In terms of biological role, dual-specificity methyltransferase that catalyzes the formation of 5-methyluridine at position 54 (m5U54) in all tRNAs, and that of position 341 (m5U341) in tmRNA (transfer-mRNA). In Salmonella typhi, this protein is tRNA/tmRNA (uracil-C(5))-methyltransferase.